An 88-amino-acid polypeptide reads, in one-letter code: Large ribosomal subunit protein eL31 (88 aa).

It belongs to the eukaryotic ribosomal protein eL31 family.

This is Large ribosomal subunit protein eL31 (rpl31e) from Sulfurisphaera tokodaii (strain DSM 16993 / JCM 10545 / NBRC 100140 / 7) (Sulfolobus tokodaii).